We begin with the raw amino-acid sequence, 72 residues long: Translation initiation factor IF-1 (72 aa).

Positions 1 to 72 (MAKDDVIEID…DKGRITYRYK (72 aa)) constitute an S1-like domain.

Belongs to the IF-1 family. As to quaternary structure, component of the 30S ribosomal translation pre-initiation complex which assembles on the 30S ribosome in the order IF-2 and IF-3, IF-1 and N-formylmethionyl-tRNA(fMet); mRNA recruitment can occur at any time during PIC assembly.

It is found in the cytoplasm. Functionally, one of the essential components for the initiation of protein synthesis. Stabilizes the binding of IF-2 and IF-3 on the 30S subunit to which N-formylmethionyl-tRNA(fMet) subsequently binds. Helps modulate mRNA selection, yielding the 30S pre-initiation complex (PIC). Upon addition of the 50S ribosomal subunit IF-1, IF-2 and IF-3 are released leaving the mature 70S translation initiation complex. The protein is Translation initiation factor IF-1 of Campylobacter fetus subsp. fetus (strain 82-40).